The following is a 419-amino-acid chain: Putative actin-fragmin kinase DDB_G0279609 (419 aa).

The segment at 73 to 94 is disordered; the sequence is INNNNNSINNNNNNNNKNKNKN.

It belongs to the protein kinase superfamily. AFK Ser/Thr protein kinase family.

This chain is Putative actin-fragmin kinase DDB_G0279609, found in Dictyostelium discoideum (Social amoeba).